Reading from the N-terminus, the 344-residue chain is Arginine N-succinyltransferase (344 aa).

L125 contacts succinyl-CoA. The active-site Proton donor is H229.

It belongs to the arginine N-succinyltransferase family.

The enzyme catalyses succinyl-CoA + L-arginine = N(2)-succinyl-L-arginine + CoA + H(+). The protein operates within amino-acid degradation; L-arginine degradation via AST pathway; L-glutamate and succinate from L-arginine: step 1/5. Functionally, catalyzes the transfer of succinyl-CoA to arginine to produce N(2)-succinylarginine. This Salmonella dublin (strain CT_02021853) protein is Arginine N-succinyltransferase.